A 521-amino-acid polypeptide reads, in one-letter code: Protein translocase subunit SecD (521 aa).

The next 6 helical transmembrane spans lie at 8 to 28 (LKLASVLGVCLLGLLLCLPNG), 359 to 379 (AGILSLGVGFLLVVVFMVLFY), 388 to 408 (IALLANLVLMVAILSLFEATL), 410 to 430 (LPGMAGMLLTLGMAVDANILI), 459 to 479 (IVDSNATAFLAHVMLFVFGTG), and 483 to 503 (GFALTITIGIATTLFTTLLLS).

The protein belongs to the SecD/SecF family. SecD subfamily. As to quaternary structure, forms a complex with SecF. Part of the essential Sec protein translocation apparatus which comprises SecA, SecYEG and auxiliary proteins SecDF-YajC and YidC.

It localises to the cell inner membrane. Part of the Sec protein translocase complex. Interacts with the SecYEG preprotein conducting channel. SecDF uses the proton motive force (PMF) to complete protein translocation after the ATP-dependent function of SecA. This is Protein translocase subunit SecD from Acetobacter pasteurianus (strain NBRC 105184 / IFO 3283-01).